Reading from the N-terminus, the 344-residue chain is Anthranilate phosphoribosyltransferase (344 aa).

5-phospho-alpha-D-ribose 1-diphosphate-binding positions include Gly80, 83–84, Thr88, 90–93, 108–116, and Ser120; these read GD, NIST, and KHGNRSVSS. Gly80 contributes to the anthranilate binding site. Position 92 (Ser92) interacts with Mg(2+). An anthranilate-binding site is contributed by Asn111. Position 166 (Arg166) interacts with anthranilate. Residues Asp225 and Glu226 each coordinate Mg(2+).

This sequence belongs to the anthranilate phosphoribosyltransferase family. In terms of assembly, homodimer. Requires Mg(2+) as cofactor.

It catalyses the reaction N-(5-phospho-beta-D-ribosyl)anthranilate + diphosphate = 5-phospho-alpha-D-ribose 1-diphosphate + anthranilate. The protein operates within amino-acid biosynthesis; L-tryptophan biosynthesis; L-tryptophan from chorismate: step 2/5. Catalyzes the transfer of the phosphoribosyl group of 5-phosphorylribose-1-pyrophosphate (PRPP) to anthranilate to yield N-(5'-phosphoribosyl)-anthranilate (PRA). The sequence is that of Anthranilate phosphoribosyltransferase from Petrotoga mobilis (strain DSM 10674 / SJ95).